Here is a 185-residue protein sequence, read N- to C-terminus: Pro-adrenomedullin (185 aa).

The N-terminal stretch at 1–21 is a signal peptide; that stretch reads MKLVSVALMYLGSLAFLGADT. R41 carries the arginine amide modification. The propeptide occupies 45 to 92; sequence ELRMSSSYPTGLADVKAGPAQTLIRPQDMKGASRSPEDSSPDAARIRV. Residues 60-87 are disordered; sequence KAGPAQTLIRPQDMKGASRSPEDSSPDA. Cysteines 110 and 115 form a disulfide. Residues 133 to 185 form a disordered region; sequence DNVAPRSKISPQGYGRRRRRSLPEAGPGRTLVSSKPQAHGAPAPPSGSAPHFL. At Y146 the chain carries Tyrosine amide. The propeptide at 148–185 is preproAM C-terminal fragment; that stretch reads RRRRRSLPEAGPGRTLVSSKPQAHGAPAPPSGSAPHFL.

The protein belongs to the adrenomedullin family. Highest levels found in pheochromocytoma and adrenal medulla. Also found in lung, ventricle and kidney tissues.

It is found in the secreted. Functionally, adrenomedullin/ADM and proadrenomedullin N-20 terminal peptide/PAMP are peptide hormones that act as potent hypotensive and vasodilatator agents. Numerous actions have been reported most related to the physiologic control of fluid and electrolyte homeostasis. In the kidney, ADM is diuretic and natriuretic, and both ADM and PAMP inhibit aldosterone secretion by direct adrenal actions. In pituitary gland, both peptides at physiologically relevant doses inhibit basal ACTH secretion. Both peptides appear to act in brain and pituitary gland to facilitate the loss of plasma volume, actions which complement their hypotensive effects in blood vessels. Its function is as follows. ADM function is mediated by the CALCRL-RAMP2 and CALCRL-RAMP3 receptor complexes with ADM showing the highest potency for the CALCRL-RAMP2 complex. The polypeptide is Pro-adrenomedullin (Homo sapiens (Human)).